A 280-amino-acid chain; its full sequence is Putative pyruvate, phosphate dikinase regulatory protein (280 aa).

Residue 154 to 161 (GVSRTSKT) participates in ADP binding.

The protein belongs to the pyruvate, phosphate/water dikinase regulatory protein family. PDRP subfamily.

The catalysed reaction is N(tele)-phospho-L-histidyl/L-threonyl-[pyruvate, phosphate dikinase] + ADP = N(tele)-phospho-L-histidyl/O-phospho-L-threonyl-[pyruvate, phosphate dikinase] + AMP + H(+). The enzyme catalyses N(tele)-phospho-L-histidyl/O-phospho-L-threonyl-[pyruvate, phosphate dikinase] + phosphate + H(+) = N(tele)-phospho-L-histidyl/L-threonyl-[pyruvate, phosphate dikinase] + diphosphate. In terms of biological role, bifunctional serine/threonine kinase and phosphorylase involved in the regulation of the pyruvate, phosphate dikinase (PPDK) by catalyzing its phosphorylation/dephosphorylation. The polypeptide is Putative pyruvate, phosphate dikinase regulatory protein (Nitrobacter winogradskyi (strain ATCC 25391 / DSM 10237 / CIP 104748 / NCIMB 11846 / Nb-255)).